Here is a 533-residue protein sequence, read N- to C-terminus: tRNA(Ile)-lysidine synthase (533 aa).

27–32 lines the ATP pocket; it reads SGGSDS.

It belongs to the tRNA(Ile)-lysidine synthase family.

The protein resides in the cytoplasm. The catalysed reaction is cytidine(34) in tRNA(Ile2) + L-lysine + ATP = lysidine(34) in tRNA(Ile2) + AMP + diphosphate + H(+). Ligates lysine onto the cytidine present at position 34 of the AUA codon-specific tRNA(Ile) that contains the anticodon CAU, in an ATP-dependent manner. Cytidine is converted to lysidine, thus changing the amino acid specificity of the tRNA from methionine to isoleucine. This is tRNA(Ile)-lysidine synthase from Rickettsia peacockii (strain Rustic).